The sequence spans 34 residues: Kappa-theraphotoxin-Scg1a (34 aa).

3 disulfide bridges follow: cysteine 2-cysteine 16, cysteine 9-cysteine 21, and cysteine 15-cysteine 28. The tract at residues 4–6 (YLF) is involved in active face.

The protein belongs to the neurotoxin 10 (Hwtx-1) family. 09 (HaTx) subfamily. Expressed by the venom gland.

The protein localises to the secreted. Reversibly inhibits potassium currents in oocytes expressing Kv2.1/KCNB1 channels (Kd=2.7 uM). Acts by shifting activation of the channel to more depolarized voltages. The toxin may bind to the S3b-S4 helices of the voltage sensor paddle. One, two, three or four toxin molecules may bind the Kv2.1/KCNB1 channel. It shows low to moderate affinity for lipid bilayers. It partitions into the bilayer membrane, where it stabilizes at the water/membrane interface. The chain is Kappa-theraphotoxin-Scg1a from Stromatopelma calceatum griseipes (Feather leg baboon tarantula).